A 423-amino-acid polypeptide reads, in one-letter code: UPF0229 protein VV2350 (423 aa).

The tract at residues 81 to 111 (QFITGDKIERPKGGQGGGGAGDGDASADGEG) is disordered. The span at 93 to 102 (GGQGGGGAGD) shows a compositional bias: gly residues.

Belongs to the UPF0229 family.

This is UPF0229 protein VV2350 from Vibrio vulnificus (strain YJ016).